Reading from the N-terminus, the 407-residue chain is RING finger protein 44 (407 aa).

Residues 26 to 58 (LSSSPGQLWGRPSNLSVEEHRASAPAGRSPRML) are disordered. The segment at 355–396 (CVVCFSDFEVRQLLRVLPCNHEFHAKCVDKWLKANRTCPICR) adopts an RING-type; atypical zinc-finger fold.

The polypeptide is RING finger protein 44 (Rnf44) (Mus musculus (Mouse)).